A 273-amino-acid polypeptide reads, in one-letter code: Shikimate dehydrogenase (NADP(+)) (273 aa).

Shikimate-binding positions include Ser19–Ser21 and Thr66. The active-site Proton acceptor is the Lys70. Shikimate is bound by residues Asn91 and Asp107. NADP(+) is bound by residues Gly131 to Ala135 and Met218. Tyr220 contacts shikimate. Residue Gly242 coordinates NADP(+).

Belongs to the shikimate dehydrogenase family. Homodimer.

It carries out the reaction shikimate + NADP(+) = 3-dehydroshikimate + NADPH + H(+). The protein operates within metabolic intermediate biosynthesis; chorismate biosynthesis; chorismate from D-erythrose 4-phosphate and phosphoenolpyruvate: step 4/7. In terms of biological role, involved in the biosynthesis of the chorismate, which leads to the biosynthesis of aromatic amino acids. Catalyzes the reversible NADPH linked reduction of 3-dehydroshikimate (DHSA) to yield shikimate (SA). In Buchnera aphidicola subsp. Acyrthosiphon pisum (strain 5A), this protein is Shikimate dehydrogenase (NADP(+)).